The chain runs to 332 residues: Anthranilate phosphoribosyltransferase (332 aa).

Residues Gly79, Gly82–Asp83, Thr87, Asn89–Thr92, Lys107–Ser115, and Ser119 each bind 5-phospho-alpha-D-ribose 1-diphosphate. Gly79 contacts anthranilate. A Mg(2+)-binding site is contributed by Ser91. Residue Asn110 participates in anthranilate binding. Arg165 contacts anthranilate. Residues Asp223 and Glu224 each coordinate Mg(2+).

It belongs to the anthranilate phosphoribosyltransferase family. In terms of assembly, homodimer. Mg(2+) serves as cofactor.

The catalysed reaction is N-(5-phospho-beta-D-ribosyl)anthranilate + diphosphate = 5-phospho-alpha-D-ribose 1-diphosphate + anthranilate. Its pathway is amino-acid biosynthesis; L-tryptophan biosynthesis; L-tryptophan from chorismate: step 2/5. In terms of biological role, catalyzes the transfer of the phosphoribosyl group of 5-phosphorylribose-1-pyrophosphate (PRPP) to anthranilate to yield N-(5'-phosphoribosyl)-anthranilate (PRA). In Vibrio cholerae serotype O1 (strain ATCC 39541 / Classical Ogawa 395 / O395), this protein is Anthranilate phosphoribosyltransferase.